Consider the following 492-residue polypeptide: UDP-N-acetylmuramoyl-L-alanyl-D-glutamate--2,6-diaminopimelate ligase (492 aa).

Ser30 serves as a coordination point for UDP-N-acetyl-alpha-D-muramoyl-L-alanyl-D-glutamate. 114–120 (GTNGKTS) is an ATP binding site. Residues 156 to 157 (TT), Ser183, Gln189, and Arg191 each bind UDP-N-acetyl-alpha-D-muramoyl-L-alanyl-D-glutamate. Lys223 carries the N6-carboxylysine modification. Residues Arg389, 413–416 (DNPR), Gly462, and Glu466 each bind meso-2,6-diaminopimelate. A Meso-diaminopimelate recognition motif motif is present at residues 413 to 416 (DNPR).

This sequence belongs to the MurCDEF family. MurE subfamily. Mg(2+) is required as a cofactor. In terms of processing, carboxylation is probably crucial for Mg(2+) binding and, consequently, for the gamma-phosphate positioning of ATP.

The protein resides in the cytoplasm. The catalysed reaction is UDP-N-acetyl-alpha-D-muramoyl-L-alanyl-D-glutamate + meso-2,6-diaminopimelate + ATP = UDP-N-acetyl-alpha-D-muramoyl-L-alanyl-gamma-D-glutamyl-meso-2,6-diaminopimelate + ADP + phosphate + H(+). It functions in the pathway cell wall biogenesis; peptidoglycan biosynthesis. Catalyzes the addition of meso-diaminopimelic acid to the nucleotide precursor UDP-N-acetylmuramoyl-L-alanyl-D-glutamate (UMAG) in the biosynthesis of bacterial cell-wall peptidoglycan. This is UDP-N-acetylmuramoyl-L-alanyl-D-glutamate--2,6-diaminopimelate ligase from Neisseria meningitidis serogroup A / serotype 4A (strain DSM 15465 / Z2491).